A 394-amino-acid chain; its full sequence is Carbamoyl phosphate synthase small chain (394 aa).

The CPSase stretch occupies residues 1–188 (MIRKERAILA…PLPYAFPTLR (188 aa)). S49, G240, and G242 together coordinate L-glutamine. Positions 192–379 (RVVLMDFGIK…IEEIDAFEGA (188 aa)) constitute a Glutamine amidotransferase type-1 domain. The active-site Nucleophile is the C267. L-glutamine-binding residues include L268, Q271, N309, G311, and Y312. Active-site residues include H352 and E354.

This sequence belongs to the CarA family. Composed of two chains; the small (or glutamine) chain promotes the hydrolysis of glutamine to ammonia, which is used by the large (or ammonia) chain to synthesize carbamoyl phosphate. Tetramer of heterodimers (alpha,beta)4.

It catalyses the reaction hydrogencarbonate + L-glutamine + 2 ATP + H2O = carbamoyl phosphate + L-glutamate + 2 ADP + phosphate + 2 H(+). The enzyme catalyses L-glutamine + H2O = L-glutamate + NH4(+). Its pathway is amino-acid biosynthesis; L-arginine biosynthesis; carbamoyl phosphate from bicarbonate: step 1/1. The protein operates within pyrimidine metabolism; UMP biosynthesis via de novo pathway; (S)-dihydroorotate from bicarbonate: step 1/3. In terms of biological role, small subunit of the glutamine-dependent carbamoyl phosphate synthetase (CPSase). CPSase catalyzes the formation of carbamoyl phosphate from the ammonia moiety of glutamine, carbonate, and phosphate donated by ATP, constituting the first step of 2 biosynthetic pathways, one leading to arginine and/or urea and the other to pyrimidine nucleotides. The small subunit (glutamine amidotransferase) binds and cleaves glutamine to supply the large subunit with the substrate ammonia. The chain is Carbamoyl phosphate synthase small chain from Deinococcus geothermalis (strain DSM 11300 / CIP 105573 / AG-3a).